Reading from the N-terminus, the 290-residue chain is Lipid phosphate phosphatase 2 (290 aa).

The next 3 helical transmembrane spans lie at 26 to 46, 69 to 89, and 93 to 113; these read WLILLLLIVIEIVLNVIEPFH, WAVPLIAVVLPFAVICVYYFI, and VYDLHHAILGLLFSVLITGVI. Residue N142 is glycosylated (N-linked (GlcNAc...) asparagine). The next 3 membrane-spanning stretches (helical) occupy residues 162–182, 193–213, and 226–246; these read SFPSGHTSWSFAGLGFLSLYL, GHVAKLCIVILPLLVAALVGV, and VFGGAIIGLTVATFCYLQFFP.

It belongs to the PA-phosphatase related phosphoesterase family. As to expression, expressed in roots, stems, leaves, buds, flowers and siliques.

It is found in the membrane. With respect to regulation, PA phosphatase activity not inhibited by N-ethylmaleimide. Functionally, may play a general 'housekeeping role' in lipid metabolism. Exhibits both diacylglycerol pyrophosphate (DGPP) phosphatase and phosphatidate (PA) phosphatase activities with no preference for either substrate. May play a role downstream of the ABA signaling pathway during seed germination and in stomatal movement in leaves. The protein is Lipid phosphate phosphatase 2 (LPP2) of Arabidopsis thaliana (Mouse-ear cress).